The following is a 293-amino-acid chain: tRNA pseudouridine synthase A (293 aa).

Residue Asp-67 is the Nucleophile of the active site. Tyr-125 contributes to the substrate binding site.

It belongs to the tRNA pseudouridine synthase TruA family. In terms of assembly, homodimer.

The enzyme catalyses uridine(38/39/40) in tRNA = pseudouridine(38/39/40) in tRNA. Its function is as follows. Formation of pseudouridine at positions 38, 39 and 40 in the anticodon stem and loop of transfer RNAs. This chain is tRNA pseudouridine synthase A, found in Synechococcus sp. (strain CC9605).